The following is a 452-amino-acid chain: Pup--protein ligase (452 aa).

Glu-9 lines the Mg(2+) pocket. Arg-53 contributes to the ATP binding site. Mg(2+) is bound at residue Tyr-55. Catalysis depends on Asp-57, which acts as the Proton acceptor. Mg(2+) is bound at residue Glu-63. ATP is bound by residues Thr-66 and Trp-419.

The protein belongs to the Pup ligase/Pup deamidase family. Pup-conjugating enzyme subfamily.

It catalyses the reaction ATP + [prokaryotic ubiquitin-like protein]-L-glutamate + [protein]-L-lysine = ADP + phosphate + N(6)-([prokaryotic ubiquitin-like protein]-gamma-L-glutamyl)-[protein]-L-lysine.. It functions in the pathway protein degradation; proteasomal Pup-dependent pathway. It participates in protein modification; protein pupylation. In terms of biological role, catalyzes the covalent attachment of the prokaryotic ubiquitin-like protein modifier Pup to the proteasomal substrate proteins, thereby targeting them for proteasomal degradation. This tagging system is termed pupylation. The ligation reaction involves the side-chain carboxylate of the C-terminal glutamate of Pup and the side-chain amino group of a substrate lysine. This chain is Pup--protein ligase, found in Nakamurella multipartita (strain ATCC 700099 / DSM 44233 / CIP 104796 / JCM 9543 / NBRC 105858 / Y-104) (Microsphaera multipartita).